A 458-amino-acid polypeptide reads, in one-letter code: Cytoplasmic tRNA 2-thiolation protein 2 (458 aa).

The protein belongs to the CTU2/NCS2 family.

It localises to the cytoplasm. The protein operates within tRNA modification; 5-methoxycarbonylmethyl-2-thiouridine-tRNA biosynthesis. Functionally, plays a central role in 2-thiolation of mcm(5)S(2)U at tRNA wobble positions of tRNA(Lys), tRNA(Glu) and tRNA(Gln). May act by forming a heterodimer with NCS6/CTU1 that ligates sulfur from thiocarboxylated URM1 onto the uridine of tRNAs at wobble position. This Arabidopsis thaliana (Mouse-ear cress) protein is Cytoplasmic tRNA 2-thiolation protein 2.